The primary structure comprises 449 residues: MFS-type transporter hasB (449 aa).

The next 12 membrane-spanning stretches (helical) occupy residues 44–64, 80–100, 112–132, 135–155, 168–188, 195–215, 255–275, 296–316, 322–342, 346–366, 387–407, and 415–435; these read VAGSFLLQFCSFGYVNACGIF, ALAWITTLQIFLLFMFGPAVG, LPPFSIGAVFSVCMLSLCTKY, VMLAQGVAFGLAAAGLSLPAM, LAVGIVSAGSSLGGVIYPCML, VGFASAVRWTALMQGILLFIA, LPWGFFVLGCFFTMWGLFAPL, AIANAGSLVGRIVPGWVSDII, MCIVTSLSGVLVLAFWLPLEF, LAGIIVFALLFGFVSGGFVSL, GGFCLAIALGALTGLPIEGAI, and FTGLMCFAGATMILGGVCTGT.

The protein belongs to the major facilitator superfamily. Monocarboxylate porter (TC 2.A.1.13) family.

The protein localises to the membrane. Functionally, MFS-type transporter; part of the gene cluster that mediates the biosynthesis of hexadehydro-astechrome (HAS), a tryptophan-derived iron(III)-complex that acts as a virulence factor in infected mice. Required for the production of HAS. In Aspergillus fumigatus (strain CBS 144.89 / FGSC A1163 / CEA10) (Neosartorya fumigata), this protein is MFS-type transporter hasB.